The following is a 435-amino-acid chain: Trigger factor (435 aa).

Residues 163 to 248 (DDITLIDFTG…INEIKRKELA (86 aa)) form the PPIase FKBP-type domain.

The protein belongs to the FKBP-type PPIase family. Tig subfamily.

It localises to the cytoplasm. The enzyme catalyses [protein]-peptidylproline (omega=180) = [protein]-peptidylproline (omega=0). Functionally, involved in protein export. Acts as a chaperone by maintaining the newly synthesized protein in an open conformation. Functions as a peptidyl-prolyl cis-trans isomerase. The sequence is that of Trigger factor from Desulforamulus reducens (strain ATCC BAA-1160 / DSM 100696 / MI-1) (Desulfotomaculum reducens).